A 162-amino-acid polypeptide reads, in one-letter code: Xanthine phosphoribosyltransferase (162 aa).

Xanthine-binding residues include Leu-5 and Thr-12. 113 to 117 (ANGQA) is a binding site for 5-phospho-alpha-D-ribose 1-diphosphate. Position 141 (Lys-141) interacts with xanthine.

The protein belongs to the purine/pyrimidine phosphoribosyltransferase family. Xpt subfamily. In terms of assembly, homodimer.

Its subcellular location is the cytoplasm. The catalysed reaction is XMP + diphosphate = xanthine + 5-phospho-alpha-D-ribose 1-diphosphate. It functions in the pathway purine metabolism; XMP biosynthesis via salvage pathway; XMP from xanthine: step 1/1. Functionally, converts the preformed base xanthine, a product of nucleic acid breakdown, to xanthosine 5'-monophosphate (XMP), so it can be reused for RNA or DNA synthesis. The chain is Xanthine phosphoribosyltransferase (xpt) from Streptococcus mitis.